The primary structure comprises 163 residues: Phosphopantetheine adenylyltransferase (163 aa).

Position 10 (serine 10) interacts with substrate. Residues 10–11 (SF) and histidine 18 each bind ATP. 3 residues coordinate substrate: lysine 42, leucine 74, and arginine 88. Residues 89–91 (GLR), glutamate 99, and 124–130 (YSFLSSS) contribute to the ATP site.

Belongs to the bacterial CoaD family. Homohexamer. Mg(2+) serves as cofactor.

It is found in the cytoplasm. It catalyses the reaction (R)-4'-phosphopantetheine + ATP + H(+) = 3'-dephospho-CoA + diphosphate. The protein operates within cofactor biosynthesis; coenzyme A biosynthesis; CoA from (R)-pantothenate: step 4/5. Reversibly transfers an adenylyl group from ATP to 4'-phosphopantetheine, yielding dephospho-CoA (dPCoA) and pyrophosphate. The chain is Phosphopantetheine adenylyltransferase from Bacillus anthracis (strain A0248).